Here is a 304-residue protein sequence, read N- to C-terminus: Protease HtpX homolog (304 aa).

Transmembrane regions (helical) follow at residues 14–34 (IFII…IGII) and 39–59 (YLNG…IMVM). Histidine 144 provides a ligand contact to Zn(2+). The active site involves glutamate 145. Histidine 148 is a Zn(2+) binding site. 2 helical membrane passes run 159-179 (IAIA…RMIF) and 202-222 (AIIY…ATAI). Glutamate 231 is a Zn(2+) binding site.

Belongs to the peptidase M48B family. Zn(2+) is required as a cofactor.

It localises to the cell membrane. This Listeria monocytogenes serovar 1/2a (strain ATCC BAA-679 / EGD-e) protein is Protease HtpX homolog.